The primary structure comprises 294 residues: Proteasome subunit beta 1 (294 aa).

A propeptide spans 1 to 65 (MTADRPALRT…MESGDLAPHG (65 aa)) (removed in mature form; by autocatalysis). The Nucleophile role is filled by threonine 66.

This sequence belongs to the peptidase T1B family. As to quaternary structure, the 20S proteasome core is composed of 14 alpha and 14 beta subunits that assemble into four stacked heptameric rings, resulting in a barrel-shaped structure. The two inner rings, each composed of seven catalytic beta subunits, are sandwiched by two outer rings, each composed of seven alpha subunits. All four combinations of alpha- and beta-subunits (beta2-alpha1, beta2-alpha2, beta1-alpha2 and beta1-alpha1) yield fully assembled and proteolytically active proteasomes. The catalytic chamber with the active sites is on the inside of the barrel. Has probably a gated structure, the ends of the cylinder being occluded by the N-termini of the alpha-subunits. Is likely capped by the proteasome-associated ATPase, ARC.

The protein localises to the cytoplasm. It carries out the reaction Cleavage of peptide bonds with very broad specificity.. It functions in the pathway protein degradation; proteasomal Pup-dependent pathway. The formation of the proteasomal ATPase ARC-20S proteasome complex, likely via the docking of the C-termini of ARC into the intersubunit pockets in the alpha-rings, may trigger opening of the gate for substrate entry. Interconversion between the open-gate and close-gate conformations leads to a dynamic regulation of the 20S proteasome proteolysis activity. In terms of biological role, component of the proteasome core, a large protease complex with broad specificity involved in protein degradation. The R.erythropolis proteasomes are able to cleave oligopeptides after Tyr, Phe and Leu, very poorly after Arg but not after Glu. Thus, displays chymotrypsin-like activity, low trypsin-like activity but no caspase-like activity. In Rhodococcus erythropolis (Arthrobacter picolinophilus), this protein is Proteasome subunit beta 1.